A 378-amino-acid chain; its full sequence is Succinyl-diaminopimelate desuccinylase (378 aa).

A Zn(2+)-binding site is contributed by His-67. Asp-69 is an active-site residue. Zn(2+) is bound at residue Asp-100. Glu-134 serves as the catalytic Proton acceptor. Positions 135, 163, and 349 each coordinate Zn(2+).

This sequence belongs to the peptidase M20A family. DapE subfamily. Homodimer. Requires Zn(2+) as cofactor. Co(2+) serves as cofactor.

It carries out the reaction N-succinyl-(2S,6S)-2,6-diaminopimelate + H2O = (2S,6S)-2,6-diaminopimelate + succinate. Its pathway is amino-acid biosynthesis; L-lysine biosynthesis via DAP pathway; LL-2,6-diaminopimelate from (S)-tetrahydrodipicolinate (succinylase route): step 3/3. Functionally, catalyzes the hydrolysis of N-succinyl-L,L-diaminopimelic acid (SDAP), forming succinate and LL-2,6-diaminopimelate (DAP), an intermediate involved in the bacterial biosynthesis of lysine and meso-diaminopimelic acid, an essential component of bacterial cell walls. The chain is Succinyl-diaminopimelate desuccinylase from Nitrosomonas eutropha (strain DSM 101675 / C91 / Nm57).